A 642-amino-acid polypeptide reads, in one-letter code: 1-deoxy-D-xylulose-5-phosphate synthase 2 (642 aa).

Residues histidine 73 and 113 to 115 each bind thiamine diphosphate; that span reads SHA. Position 144 (aspartate 144) interacts with Mg(2+). Residues 145–146, asparagine 174, tyrosine 285, and glutamate 366 each bind thiamine diphosphate; that span reads GA. Asparagine 174 contributes to the Mg(2+) binding site.

This sequence belongs to the transketolase family. DXPS subfamily. In terms of assembly, homodimer. Mg(2+) serves as cofactor. It depends on thiamine diphosphate as a cofactor.

The enzyme catalyses D-glyceraldehyde 3-phosphate + pyruvate + H(+) = 1-deoxy-D-xylulose 5-phosphate + CO2. The protein operates within metabolic intermediate biosynthesis; 1-deoxy-D-xylulose 5-phosphate biosynthesis; 1-deoxy-D-xylulose 5-phosphate from D-glyceraldehyde 3-phosphate and pyruvate: step 1/1. Catalyzes the acyloin condensation reaction between C atoms 2 and 3 of pyruvate and glyceraldehyde 3-phosphate to yield 1-deoxy-D-xylulose-5-phosphate (DXP). The polypeptide is 1-deoxy-D-xylulose-5-phosphate synthase 2 (Streptomyces coelicolor (strain ATCC BAA-471 / A3(2) / M145)).